The following is a 659-amino-acid chain: Mitochondrial Rho GTPase 1 (659 aa).

The Cytoplasmic segment spans residues 1–631 (MTKTRIRIVV…LTNDIDYRQT (631 aa)). One can recognise a Miro 1 domain in the interval 3-183 (KTRIRIVVCG…FYLCQRTITN (181 aa)). GTP-binding positions include 12–19 (GDSGVGKT), 61–63 (DTG), and 115–118 (NKCD). EF-hand domains are found at residues 199 to 234 (LGVL…CFSK) and 328 to 363 (LGYR…TPGL). The Ca(2+) site is built by aspartate 212, aspartate 214, aspartate 216, glutamate 223, aspartate 341, aspartate 343, aspartate 345, and glutamate 352. One can recognise a Miro 2 domain in the interval 444-609 (RKVLNCYMLG…FIKLTEVALE (166 aa)). Residues 453–460 (GKGNSGKS), 489–493 (ELKGG), and 558–561 (LKAD) each bind GTP. A helical; Anchor for type IV membrane protein transmembrane segment spans residues 632 to 652 (IVAISSVVGFASLFTFTALKI). Topologically, residues 653 to 659 (YSSFKNT) are mitochondrial intermembrane.

This sequence belongs to the mitochondrial Rho GTPase family.

It is found in the mitochondrion outer membrane. Its function is as follows. Mitochondrial GTPase involved in mitochondrial trafficking. Probably involved in control of anterograde transport of mitochondria and their subcellular distribution. The chain is Mitochondrial Rho GTPase 1 (GEM1) from Kluyveromyces lactis (strain ATCC 8585 / CBS 2359 / DSM 70799 / NBRC 1267 / NRRL Y-1140 / WM37) (Yeast).